The following is a 572-amino-acid chain: Nuclear hormone receptor family member nhr-25 (572 aa).

The segment at residues 15–90 (GEMCPVCGDR…MGMKMEAVRA (76 aa)) is a DNA-binding region (nuclear receptor). 2 consecutive NR C4-type zinc fingers follow at residues 18-38 (CPVC…CESC) and 54-78 (CSAE…FQKC). Positions 307–567 (PTEKTVDHFY…PTPQATYTAV (261 aa)) constitute an NR LBD domain.

This sequence belongs to the nuclear hormone receptor family. In terms of assembly, interacts with lin-39. Interacts with nob-1. As to expression, expressed in the epidermis, the developing somatic gonad, and a subset of other epithelial cells.

It is found in the nucleus. Its function is as follows. Orphan nuclear receptor and probable transcription activator, required during development. Plays a role in male tail tip morphogenesis regulating the expression of the transcription factor dmd-3 in a negative feedback loop. Regulates vulval precursor cell (VPC) differentiation, in concert with homeobox protein lin-39. Involved in promoting embryogenesis, in concert with homeobox protein nob-1. May play a role in modulation of lifespan and immunity. The chain is Nuclear hormone receptor family member nhr-25 from Caenorhabditis elegans.